The following is a 378-amino-acid chain: Dual-specificity RNA methyltransferase RlmN (378 aa).

E95 functions as the Proton acceptor in the catalytic mechanism. The 245-residue stretch at 101 to 345 folds into the Radical SAM core domain; sequence EETRGTLCVS…TTIRKTRGDD (245 aa). Residues C108 and C350 are joined by a disulfide bond. [4Fe-4S] cluster contacts are provided by C115, C119, and C122. S-adenosyl-L-methionine is bound by residues 176–177, S208, 230–232, and N307; these read GE and SLH. The active-site S-methylcysteine intermediate is the C350.

The protein belongs to the radical SAM superfamily. RlmN family. Requires [4Fe-4S] cluster as cofactor.

The protein localises to the cytoplasm. It catalyses the reaction adenosine(2503) in 23S rRNA + 2 reduced [2Fe-2S]-[ferredoxin] + 2 S-adenosyl-L-methionine = 2-methyladenosine(2503) in 23S rRNA + 5'-deoxyadenosine + L-methionine + 2 oxidized [2Fe-2S]-[ferredoxin] + S-adenosyl-L-homocysteine. The catalysed reaction is adenosine(37) in tRNA + 2 reduced [2Fe-2S]-[ferredoxin] + 2 S-adenosyl-L-methionine = 2-methyladenosine(37) in tRNA + 5'-deoxyadenosine + L-methionine + 2 oxidized [2Fe-2S]-[ferredoxin] + S-adenosyl-L-homocysteine. Specifically methylates position 2 of adenine 2503 in 23S rRNA and position 2 of adenine 37 in tRNAs. m2A2503 modification seems to play a crucial role in the proofreading step occurring at the peptidyl transferase center and thus would serve to optimize ribosomal fidelity. The sequence is that of Dual-specificity RNA methyltransferase RlmN from Burkholderia pseudomallei (strain K96243).